The following is a 100-amino-acid chain: Small ribosomal subunit protein uS14c (100 aa).

This sequence belongs to the universal ribosomal protein uS14 family. In terms of assembly, part of the 30S ribosomal subunit.

Its subcellular location is the plastid. It is found in the chloroplast. Functionally, binds 16S rRNA, required for the assembly of 30S particles. This chain is Small ribosomal subunit protein uS14c, found in Vitis vinifera (Grape).